Here is a 318-residue protein sequence, read N- to C-terminus: Porphobilinogen deaminase (318 aa).

The residue at position 241 (cysteine 241) is an S-(dipyrrolylmethanemethyl)cysteine.

The protein belongs to the HMBS family. In terms of assembly, monomer. Dipyrromethane is required as a cofactor.

The catalysed reaction is 4 porphobilinogen + H2O = hydroxymethylbilane + 4 NH4(+). The protein operates within porphyrin-containing compound metabolism; protoporphyrin-IX biosynthesis; coproporphyrinogen-III from 5-aminolevulinate: step 2/4. Tetrapolymerization of the monopyrrole PBG into the hydroxymethylbilane pre-uroporphyrinogen in several discrete steps. The polypeptide is Porphobilinogen deaminase (Geotalea uraniireducens (strain Rf4) (Geobacter uraniireducens)).